Here is a 244-residue protein sequence, read N- to C-terminus: Lipoprotein-releasing system ATP-binding protein LolD (244 aa).

The ABC transporter domain occupies 19-244 (IRAEALAKTY…KLRELAPSAV (226 aa)). Residue 55–62 (GASGAGKS) coordinates ATP.

This sequence belongs to the ABC transporter superfamily. Lipoprotein translocase (TC 3.A.1.125) family. In terms of assembly, the complex is composed of two ATP-binding proteins (LolD) and two transmembrane proteins (LolC and LolE).

Its subcellular location is the cell inner membrane. Functionally, part of the ABC transporter complex LolCDE involved in the translocation of mature outer membrane-directed lipoproteins, from the inner membrane to the periplasmic chaperone, LolA. Responsible for the formation of the LolA-lipoprotein complex in an ATP-dependent manner. This chain is Lipoprotein-releasing system ATP-binding protein LolD, found in Xanthomonas oryzae pv. oryzae (strain MAFF 311018).